The sequence spans 2590 residues: DNA polymerase theta (2590 aa).

Residues 1–12 (MNLLRRSGKRRR) show a composition bias toward basic residues. The segment at 1 to 33 (MNLLRRSGKRRRSESGSDSFSGSGGDSSASPQF) is disordered. The segment covering 16 to 30 (GSDSFSGSGGDSSAS) has biased composition (low complexity). ATP-binding positions include glutamine 96 and 115-122 (APTSAGKT). The 185-residue stretch at 102 to 286 (LGQVLEGKNL…WLNAELYHTD (185 aa)) folds into the Helicase ATP-binding domain. The helicase activity stretch occupies residues 102 to 554 (LGQVLEGKNL…STSQDMHTYA (453 aa)). The DEAH box motif lies at 216–219 (DELH). The 234-residue stretch at 321 to 554 (GDEDHVVSLC…STSQDMHTYA (234 aa)) folds into the Helicase C-terminal domain. The segment at 847 to 894 (DEEEEAVEERRNMRTIWVTGRKGLTEREAAALIVEEARMILQQDLVEM) is interaction with RAD51. Lysine 990 is subject to N6-acetyllysine. The segment at 1034-1060 (KMSRSFRSWKRRKHLKRSRDSSPLKDS) is disordered. The span at 1040 to 1050 (RSWKRRKHLKR) shows a compositional bias: basic residues. Serine 1289, serine 1482, serine 1486, serine 1488, serine 1493, serine 1555, and serine 1563 each carry phosphoserine; by PLK1. Residues 1594–1622 (SDPVLDEHHQGDQDGGDQDERAEKSKLTG) form a disordered region. A compositionally biased stretch (basic and acidic residues) spans 1598–1619 (LDEHHQGDQDGGDQDERAEKSK). Phosphoserine; by PLK1 is present on residues serine 1628 and serine 1635. Threonine 1755 is modified (phosphothreonine; by PLK1). A disordered region spans residues 1777–1797 (PSDIKNHDLSPGSRNGFKDNS). A DNA polymerase activity region spans residues 2097-2584 (AECESQKHIM…KVKIGASWGE (488 aa)). 2 loop regions span residues 2142 to 2177 (KLPP…GRQF) and 2257 to 2322 (EIKM…VPFP). Mg(2+) contacts are provided by aspartate 2330 and tyrosine 2331. Residues 2491 to 2535 (QLETFHSTFKSHGHREGMLQSDQTGLSRKRKLQGMFCPIRGGFFI) are loop 3. Aspartate 2540 serves as a coordination point for Mg(2+).

The protein belongs to the DNA polymerase type-A family. Homomultimer; forms homodimers and homotetramers. Interacts with RAD51. Interacts with ORC2 and ORC4. Interacts with RHNO1; interaction takes place during mitosis and promotes POLQ recruitment to DNA damage sites. Interacts (when phosphorylated) with TOPBP1 (via BRCT domains 7 and 8); promoting POLQ recruitment to DNA damage sites. Mg(2+) serves as cofactor. In terms of processing, phosphorylated by PLK1; promoting interaction with TOPBP1 and recruitment to DNA damage sites. In terms of tissue distribution, highly expressed in testis.

The protein resides in the nucleus. It localises to the chromosome. The enzyme catalyses DNA(n) + a 2'-deoxyribonucleoside 5'-triphosphate = DNA(n+1) + diphosphate. It catalyses the reaction ATP + H2O = ADP + phosphate + H(+). With respect to regulation, specifically inhibited by the antibiotic novobiocin. The polymerase activity is specifically inhibited by the small molecule ART558. Novobiocin and ART558 confer specific killing of BRCA1/2-deficient cells and synergize with the poly [ADP-ribose] polymerase (PARP) inhibitor olaparib. Functionally, low-fidelity DNA polymerase with a helicase activity that promotes microhomology-mediated end-joining (MMEJ), an alternative non-homologous end-joining (NHEJ) machinery required to repair double-strand breaks in DNA during mitosis. MMEJ is an error-prone repair pathway that produces deletions of sequences from the strand being repaired and promotes genomic rearrangements, such as telomere fusions, some of them leading to cellular transformation. MMEJ is required during mitosis to repair persistent double-strand breaks that originate in S-phase. Although error-prone, MMEJ protects against chromosomal instability and tumorigenesis. The polymerase acts by binding directly the 2 ends of resected double-strand breaks, allowing microhomologous sequences in the overhangs to form base pairs. It then extends each strand from the base-paired region using the opposing overhang as a template. Requires partially resected DNA containing 2 to 6 base pairs of microhomology to perform MMEJ. The polymerase lacks proofreading activity and is highly promiscuous: unlike most polymerases, promotes extension of ssDNA and partial ssDNA (pssDNA) substrates. When the ends of a break do not contain terminal microhomology must identify embedded complementary sequences through a scanning step. Also acts as a DNA helicase, promoting dissociation of the replication protein A complex (RPA/RP-A), composed of RPA1, RPA2 and RPA3, from resected double-strand breaks to allow their annealing and subsequent joining by MMEJ. Removal of RPA/RP-A complex proteins prevents RAD51 accumulation at resected ends, thereby inhibiting homology-recombination repair (HR) pathway. Also shows RNA-directed DNA polymerase activity to mediate DNA repair in vitro; however this activity needs additional evidence in vivo. May also have lyase activity. Involved in somatic hypermutation of immunoglobulin genes, a process that requires the activity of DNA polymerases to ultimately introduce mutations at both A/T and C/G base pairs. POLQ-mediated end joining activity is involved in random integration of exogenous DNA hampers. The chain is DNA polymerase theta from Homo sapiens (Human).